A 65-amino-acid polypeptide reads, in one-letter code: Toxin Co52 (65 aa).

The LCN-type CS-alpha/beta domain occupies Glu-2–Cys-65. Cystine bridges form between Cys-12–Cys-65, Cys-16–Cys-41, Cys-25–Cys-46, and Cys-29–Cys-48.

Expressed by the venom gland.

It localises to the secreted. Its function is as follows. Beta toxins bind voltage-independently at site-4 of sodium channels (Nav) and shift the voltage of activation toward more negative potentials thereby affecting sodium channel activation and promoting spontaneous and repetitive firing. Not toxic to mice, chicks, crickets or woodlice (at 5 ug). The polypeptide is Toxin Co52 (Centruroides ornatus (Scorpion)).